Reading from the N-terminus, the 519-residue chain is tRNA pseudouridine synthase Pus10 (519 aa).

The disordered stretch occupies residues 70 to 98; the sequence is NENEEIDENTKNNEDTENKADDKSQSNEE. Basic and acidic residues predominate over residues 77–98; it reads ENTKNNEDTENKADDKSQSNEE. A THUMP domain is found at 144–265; sequence NESEENESNI…NQKIYLQINP (122 aa). D334 functions as the Nucleophile in the catalytic mechanism. Substrate-binding residues include Y398 and Y476.

This sequence belongs to the pseudouridine synthase Pus10 family.

It carries out the reaction uridine(54) in tRNA = pseudouridine(54) in tRNA. The enzyme catalyses uridine(55) in tRNA = pseudouridine(55) in tRNA. Responsible for synthesis of pseudouridine from uracil-54 and uracil-55 in the psi GC loop of transfer RNAs. The protein is tRNA pseudouridine synthase Pus10 of Methanococcus voltae (strain ATCC BAA-1334 / A3).